The primary structure comprises 150 residues: Urease accessory protein UreE (150 aa).

Belongs to the UreE family.

It localises to the cytoplasm. Functionally, involved in urease metallocenter assembly. Binds nickel. Probably functions as a nickel donor during metallocenter assembly. The protein is Urease accessory protein UreE of Staphylococcus aureus (strain MRSA252).